The primary structure comprises 355 residues: Zinc finger protein CONSTANS-LIKE 1 (355 aa).

Zn(2+) is bound by residues Cys12, Cys15, Cys35, His40, Cys55, Cys58, Cys78, and His83. The segment at 12 to 54 adopts a B box-type 1; atypical zinc-finger fold; sequence CDTCRSAACTVYCRADSAYLCSSCDAQVHAANRLASRHERVRV. The B box-type 2; atypical zinc finger occupies 55 to 97; the sequence is CQSCERAPAAFFCKADAASLCTTCDSEIHSANPLARRHQRVPI. The segment covering 252–264 has biased composition (polar residues); that stretch reads ESTTSDATVSNPR. A disordered region spans residues 252 to 281; it reads ESTTSDATVSNPRSPKAVTDQPPYPPAQML. The region spanning 286 to 328 is the CCT domain; it reads REARVLRYREKKKMRKFEKTIRYASRKAYAEKRPRIKGRFAKK.

It belongs to the CONSTANS family. Highly expressed in leaves and at lower levels in stems, flowers and siliques. Not detected in roots.

It is found in the nucleus. Functionally, putative transcription factor that may be involved in the light input to the circadian clock but does not affect flowering time. In Arabidopsis thaliana (Mouse-ear cress), this protein is Zinc finger protein CONSTANS-LIKE 1 (COL1).